Here is a 57-residue protein sequence, read N- to C-terminus: Large ribosomal subunit protein eL20 (57 aa).

It belongs to the eukaryotic ribosomal protein eL20 family. In terms of assembly, part of the 50S ribosomal subunit. Binds 23S rRNA.

This chain is Large ribosomal subunit protein eL20, found in Halorhabdus utahensis (strain DSM 12940 / JCM 11049 / AX-2).